The sequence spans 257 residues: Glutamate racemase (257 aa).

Substrate-binding positions include 12–13 (DS) and 44–45 (YG). Cysteine 75 (proton donor/acceptor) is an active-site residue. 76-77 (NT) contributes to the substrate binding site. Catalysis depends on cysteine 185, which acts as the Proton donor/acceptor. 186–187 (TH) is a substrate binding site.

It belongs to the aspartate/glutamate racemases family.

It catalyses the reaction L-glutamate = D-glutamate. The protein operates within cell wall biogenesis; peptidoglycan biosynthesis. Its function is as follows. Provides the (R)-glutamate required for cell wall biosynthesis. The chain is Glutamate racemase from Clostridium botulinum (strain 657 / Type Ba4).